The chain runs to 275 residues: Large ribosomal subunit protein uL2c (275 aa).

2 disordered regions span residues 32-53 and 218-242; these read SLSK…TCRH and PTVR…APIG.

It belongs to the universal ribosomal protein uL2 family. Part of the 50S ribosomal subunit.

It is found in the plastid. The protein resides in the chloroplast. This is Large ribosomal subunit protein uL2c (rpl2) from Tetradesmus obliquus (Green alga).